The following is a 196-amino-acid chain: uncharacterized protein (196 aa).

The chain crosses the membrane as a helical span at residues 71-87 (YVKLIGTGCYVAILISG).

Its subcellular location is the membrane. This is an uncharacterized protein from Dictyostelium discoideum (Social amoeba).